Consider the following 790-residue polypeptide: Probable quinate dehydrogenase (quinone) (790 aa).

Helical transmembrane passes span 22–42 (GSWYFLLMGLATALAGVLIVL), 48–68 (ALVYGVAFALTLVWALWDAGL), 77–94 (LMLPAAFAVLVALAWPAL), and 106–126 (AYGVATVLALAVVAGIGGMFV). Positions 171 to 200 (RSNGRPAAGSPGPTTPGEIANSDGNGAEDQ) are disordered. The segment covering 174-187 (GRPAAGSPGPTTPG) has biased composition (low complexity).

It belongs to the bacterial PQQ dehydrogenase family. It depends on pyrroloquinoline quinone as a cofactor.

The protein resides in the cell membrane. It catalyses the reaction L-quinate + a quinone = 3-dehydroquinate + a quinol. It participates in aromatic compound metabolism; 3,4-dihydroxybenzoate biosynthesis; 3-dehydroquinate from D-quinate (PQQ route): step 1/1. The chain is Probable quinate dehydrogenase (quinone) (qumA) from Xanthomonas campestris pv. juglandis (Xanthomonas arboricola pv. juglandis).